A 275-amino-acid polypeptide reads, in one-letter code: LexA repressor (275 aa).

Residues 1–50 are disordered; that stretch reads MKRSTPRPARSQAALTTSSEESPDRVERGGDGVATVTDFPDGPPDETGLT. Residues 73-93 constitute a DNA-binding region (H-T-H motif); sequence MREIGEAVGLTSTSSVAHQLM. Residues 114–151 are disordered; sequence RSAESAVPDASAGHSPAADRAPSARRPPRGPSPIDSNP. Catalysis depends on for autocatalytic cleavage activity residues Ser-199 and Lys-236.

The protein belongs to the peptidase S24 family. As to quaternary structure, homodimer.

It catalyses the reaction Hydrolysis of Ala-|-Gly bond in repressor LexA.. In terms of biological role, represses a number of genes involved in the response to DNA damage (SOS response), including recA and lexA. In the presence of single-stranded DNA, RecA interacts with LexA causing an autocatalytic cleavage which disrupts the DNA-binding part of LexA, leading to derepression of the SOS regulon and eventually DNA repair. This chain is LexA repressor, found in Acidothermus cellulolyticus (strain ATCC 43068 / DSM 8971 / 11B).